We begin with the raw amino-acid sequence, 515 residues long: Probable cytochrome P450 6d4 (515 aa).

Cys-457 serves as a coordination point for heme.

This sequence belongs to the cytochrome P450 family. Requires heme as cofactor.

The protein localises to the endoplasmic reticulum membrane. Its subcellular location is the microsome membrane. Functionally, may be involved in the metabolism of insect hormones and in the breakdown of synthetic insecticides. This is Probable cytochrome P450 6d4 (Cyp6d4) from Drosophila melanogaster (Fruit fly).